Here is a 308-residue protein sequence, read N- to C-terminus: MNWITNYVRPKINSMLGRRTDMPENLWIKDPETGEMVFHKDLESNQFVIPSSGHHMKISAKERLKYFLDDGRYEQLENPKVVLDPLKFRDEKRYTDRLKDAKAKTGLEDAIVNALGTIEGLPVVVTVQDFAFMGGSLGMAAGDAIVHAFEVALQRKRPLILFAASGGARMQEGILSLMQLPRTTVGVDRLKEAGLPYIVVLTNPTTGGVTASYAMLGDVHIAEPGALIGFAGPRVIEQTIREKLPDGFQRSEYLMEHGMVDMVVSRLEMRQTIARLLKMLLKMPGEQKPLEPEILPPAVVAAEARPQA.

The region spanning 26-295 is the CoA carboxyltransferase N-terminal domain; sequence LWIKDPETGE…EQKPLEPEIL (270 aa).

The protein belongs to the AccD/PCCB family. Acetyl-CoA carboxylase is a heterohexamer composed of biotin carboxyl carrier protein (AccB), biotin carboxylase (AccC) and two subunits each of ACCase subunit alpha (AccA) and ACCase subunit beta (AccD).

The protein localises to the cytoplasm. It carries out the reaction N(6)-carboxybiotinyl-L-lysyl-[protein] + acetyl-CoA = N(6)-biotinyl-L-lysyl-[protein] + malonyl-CoA. The protein operates within lipid metabolism; malonyl-CoA biosynthesis; malonyl-CoA from acetyl-CoA: step 1/1. Component of the acetyl coenzyme A carboxylase (ACC) complex. Biotin carboxylase (BC) catalyzes the carboxylation of biotin on its carrier protein (BCCP) and then the CO(2) group is transferred by the transcarboxylase to acetyl-CoA to form malonyl-CoA. The polypeptide is Acetyl-coenzyme A carboxylase carboxyl transferase subunit beta (Mesorhizobium japonicum (strain LMG 29417 / CECT 9101 / MAFF 303099) (Mesorhizobium loti (strain MAFF 303099))).